The sequence spans 156 residues: Low-salt glycan biosynthesis protein Agl8 (156 aa).

Substrate-binding positions include 14–15 (RI) and R47. One can recognise a Nudix hydrolase domain in the interval 25-156 (ANVPLVSVDL…YVERYLDALD (132 aa)). 3 residues coordinate Mg(2+): G60, E80, and Q130. The short motif at 61–82 (GTVFKNETLTDALYRVADEELG) is the Nudix box element.

This sequence belongs to the Nudix hydrolase family. Mg(2+) is required as a cofactor.

The protein operates within protein modification; protein glycosylation. It participates in cell surface structure biogenesis; S-layer biogenesis. Functionally, nudix hydrolase involved in N-glycan biosynthetic pathway that takes place under low-salt conditions (1.75 M instead of 3.4 M). Participates in the formation of the tetrasaccharide present at 'Asn-532' of S-layer glycoprotein Csg, consisting of a sulfated hexose, 2 hexoses and rhamnose. Mediates attachment of sugar 3 in the tetrasaccharide. This chain is Low-salt glycan biosynthesis protein Agl8 (agl8), found in Haloferax volcanii (strain ATCC 29605 / DSM 3757 / JCM 8879 / NBRC 14742 / NCIMB 2012 / VKM B-1768 / DS2) (Halobacterium volcanii).